A 264-amino-acid chain; its full sequence is Thymidylate synthase (264 aa).

Residue Arg21 participates in dUMP binding. His51 serves as a coordination point for (6R)-5,10-methylene-5,6,7,8-tetrahydrofolate. 126–127 (RR) is a binding site for dUMP. Cys146 functions as the Nucleophile in the catalytic mechanism. DUMP-binding positions include 166 to 169 (RSAD), Asn177, and 207 to 209 (HLY). Asp169 provides a ligand contact to (6R)-5,10-methylene-5,6,7,8-tetrahydrofolate. Ser263 contributes to the (6R)-5,10-methylene-5,6,7,8-tetrahydrofolate binding site.

The protein belongs to the thymidylate synthase family. Bacterial-type ThyA subfamily. Homodimer.

The protein resides in the cytoplasm. The catalysed reaction is dUMP + (6R)-5,10-methylene-5,6,7,8-tetrahydrofolate = 7,8-dihydrofolate + dTMP. It functions in the pathway pyrimidine metabolism; dTTP biosynthesis. In terms of biological role, catalyzes the reductive methylation of 2'-deoxyuridine-5'-monophosphate (dUMP) to 2'-deoxythymidine-5'-monophosphate (dTMP) while utilizing 5,10-methylenetetrahydrofolate (mTHF) as the methyl donor and reductant in the reaction, yielding dihydrofolate (DHF) as a by-product. This enzymatic reaction provides an intracellular de novo source of dTMP, an essential precursor for DNA biosynthesis. This is Thymidylate synthase from Nitrosococcus oceani (strain ATCC 19707 / BCRC 17464 / JCM 30415 / NCIMB 11848 / C-107).